Here is a 210-residue protein sequence, read N- to C-terminus: Proteasome subunit beta 2 (210 aa).

Residues 1–12 (MSNNVEEKILHG) constitute a propeptide, removed in mature form; by autocatalysis. T13 (nucleophile) is an active-site residue.

It belongs to the peptidase T1B family. As to quaternary structure, the 20S proteasome core is composed of 14 alpha and 14 beta subunits that assemble into four stacked heptameric rings, resulting in a barrel-shaped structure. The two inner rings, each composed of seven catalytic beta subunits, are sandwiched by two outer rings, each composed of seven alpha subunits. The catalytic chamber with the active sites is on the inside of the barrel. Has a gated structure, the ends of the cylinder being occluded by the N-termini of the alpha-subunits. Is capped at one or both ends by the proteasome regulatory ATPase, PAN.

The protein localises to the cytoplasm. The catalysed reaction is Cleavage of peptide bonds with very broad specificity.. With respect to regulation, the formation of the proteasomal ATPase PAN-20S proteasome complex, via the docking of the C-termini of PAN into the intersubunit pockets in the alpha-rings, triggers opening of the gate for substrate entry. Interconversion between the open-gate and close-gate conformations leads to a dynamic regulation of the 20S proteasome proteolysis activity. In terms of biological role, component of the proteasome core, a large protease complex with broad specificity involved in protein degradation. The polypeptide is Proteasome subunit beta 2 (Cenarchaeum symbiosum (strain A)).